The sequence spans 175 residues: Ribosome maturation factor RimM (175 aa).

Residues Glu95–Phe175 form the PRC barrel domain.

The protein belongs to the RimM family. As to quaternary structure, binds ribosomal protein uS19.

It is found in the cytoplasm. Its function is as follows. An accessory protein needed during the final step in the assembly of 30S ribosomal subunit, possibly for assembly of the head region. Essential for efficient processing of 16S rRNA. May be needed both before and after RbfA during the maturation of 16S rRNA. It has affinity for free ribosomal 30S subunits but not for 70S ribosomes. The polypeptide is Ribosome maturation factor RimM (Glaesserella parasuis serovar 5 (strain SH0165) (Haemophilus parasuis)).